Here is a 407-residue protein sequence, read N- to C-terminus: MNKSNTISRIGTPLTHNATKVMLLGSGELGKEVIISLQRLGIEVIAVDRYANAPGHQVAHRAYVIDMTDGVALAALINQEKPDLVVPEIEAIATATLLEMENAGNVRVIPTARAAWLTMDREGIRRLAAEELGVATSPYRFADSLKELKAGCADIGYPCVVKPVMSSSGKGQSKLNSADDIEAAWNCAAAGGRVDTGRVIVEGFIDFDYEITLLTVRAIGADGATHTHFCEPIGHLQVNGDYVESWQPQAMHPGALQKAHDIAKKVTDNLGGLGLFGVELFVKHDMVWFSEVSPRPHDTGMVTMASQEQSEFELHAKAILGLPVNVAMKTPAASAVIYGQHDGEVVAFEGVADALRVPGTDVRLFGKPESFARRRMGVALAAAADVETARNNARTAAAKIKPVAHSR.

Residues 28-29 and glutamate 88 each bind N(1)-(5-phospho-beta-D-ribosyl)glycinamide; that span reads EL. Residues arginine 121, lysine 162, 167–172, 202–205, and glutamate 210 each bind ATP; these read SSGKGQ and EGFI. Residues 126-320 enclose the ATP-grasp domain; that stretch reads RLAAEELGVA…EFELHAKAIL (195 aa). 2 residues coordinate Mg(2+): glutamate 279 and glutamate 291. N(1)-(5-phospho-beta-D-ribosyl)glycinamide contacts are provided by residues aspartate 298, lysine 367, and 374–375; that span reads RR.

It belongs to the PurK/PurT family. Homodimer.

The catalysed reaction is N(1)-(5-phospho-beta-D-ribosyl)glycinamide + formate + ATP = N(2)-formyl-N(1)-(5-phospho-beta-D-ribosyl)glycinamide + ADP + phosphate + H(+). The protein operates within purine metabolism; IMP biosynthesis via de novo pathway; N(2)-formyl-N(1)-(5-phospho-D-ribosyl)glycinamide from N(1)-(5-phospho-D-ribosyl)glycinamide (formate route): step 1/1. Functionally, involved in the de novo purine biosynthesis. Catalyzes the transfer of formate to 5-phospho-ribosyl-glycinamide (GAR), producing 5-phospho-ribosyl-N-formylglycinamide (FGAR). Formate is provided by PurU via hydrolysis of 10-formyl-tetrahydrofolate. The sequence is that of Formate-dependent phosphoribosylglycinamide formyltransferase from Herminiimonas arsenicoxydans.